The following is a 254-amino-acid chain: Pre-miRNA 5'-monophosphate methyltransferase (254 aa).

The Bin3-type SAM domain occupies 34–254 (ENRLSLIPEA…DRSLLLFRRQ (221 aa)). S-adenosyl-L-methionine is bound by residues R36, N66, D99, and 124–125 (DI).

Belongs to the methyltransferase superfamily.

It is found in the cytoplasm. The catalysed reaction is a 5'-end 5'-phospho-ribonucleoside-RNA + S-adenosyl-L-methionine = a 5'-end (5'-methylphospho)-ribonucleoside-RNA + S-adenosyl-L-homocysteine. It carries out the reaction a 5'-end 5'-phospho-ribonucleoside-RNA + 2 S-adenosyl-L-methionine = a 5'-end (5'-bismethylphospho)-ribonucleoside-RNA + 2 S-adenosyl-L-homocysteine. Functionally, O-methyltransferase that specifically monomethylates 5'-monophosphate of cytoplasmic histidyl tRNA (tRNA(His)), acting as a capping enzyme by protecting tRNA(His) from cleavage by DICER1. Also able, with less efficiently, to methylate the 5' monophosphate of a subset of pre-miRNAs, acting as a negative regulator of miRNA processing. The 5' monophosphate of pre-miRNAs is recognized by DICER1 and is required for pre-miRNAs processing: methylation at this position reduces the processing of pre-miRNAs by DICER1. Was also reported to mediate dimethylation of pre-miR-145; however dimethylation cannot be reproduced by another group which observes a monomethylation of pre-miR-145. This Danio rerio (Zebrafish) protein is Pre-miRNA 5'-monophosphate methyltransferase (bcdin3d).